A 148-amino-acid chain; its full sequence is Urease accessory protein UreE (148 aa).

It belongs to the UreE family.

The protein resides in the cytoplasm. Its function is as follows. Involved in urease metallocenter assembly. Binds nickel. Probably functions as a nickel donor during metallocenter assembly. The sequence is that of Urease accessory protein UreE from Nostoc punctiforme (strain ATCC 29133 / PCC 73102).